The following is a 185-amino-acid chain: Ribosome hibernation promotion factor (185 aa).

A probably still associates with ribosome region spans residues 1 to 125; the sequence is MIKFNIRGEN…PLDTTDEVAE (125 aa). Residues 126–185 are required but not sufficient to restore ribosome dimerization, in vitro will replace E.coli RMF in ribosome dimerization; the sequence is DHVDIVRTKHVALKPMDAEEAVLQMDMLGHDFYVFTDADSNGTHVVYRRTDGRYGLIETE.

This sequence belongs to the HPF/YfiA ribosome-associated protein family. Long HPF subfamily. Interacts with 100S ribosomes in stationary phase; alters the relative position of the 30S and 50S subunits.

The protein resides in the cytoplasm. Required for dimerization of active 70S ribosomes into 100S ribosomes in stationary phase; 100S ribosomes are translationally inactive and sometimes present during exponential growth. Able to dimerize E.coli 70S ribosomes in vitro. The sequence is that of Ribosome hibernation promotion factor from Lactococcus lactis subsp. cremoris (strain MG1363).